The sequence spans 235 residues: Phosphoribosylaminoimidazole-succinocarboxamide synthase (235 aa).

Belongs to the SAICAR synthetase family.

The catalysed reaction is 5-amino-1-(5-phospho-D-ribosyl)imidazole-4-carboxylate + L-aspartate + ATP = (2S)-2-[5-amino-1-(5-phospho-beta-D-ribosyl)imidazole-4-carboxamido]succinate + ADP + phosphate + 2 H(+). It functions in the pathway purine metabolism; IMP biosynthesis via de novo pathway; 5-amino-1-(5-phospho-D-ribosyl)imidazole-4-carboxamide from 5-amino-1-(5-phospho-D-ribosyl)imidazole-4-carboxylate: step 1/2. In Streptococcus pneumoniae (strain ATCC 700669 / Spain 23F-1), this protein is Phosphoribosylaminoimidazole-succinocarboxamide synthase.